The primary structure comprises 431 residues: Ribosomal RNA small subunit methyltransferase B (431 aa).

S-adenosyl-L-methionine is bound by residues 254 to 260 (CAAPGGK), aspartate 277, aspartate 303, and aspartate 322. Cysteine 375 (nucleophile) is an active-site residue. The segment at 398–417 (LHATGTPASPGQQNLPGPEE) is disordered. Positions 403–412 (TPASPGQQNL) are enriched in polar residues.

Belongs to the class I-like SAM-binding methyltransferase superfamily. RsmB/NOP family.

The protein resides in the cytoplasm. The catalysed reaction is cytidine(967) in 16S rRNA + S-adenosyl-L-methionine = 5-methylcytidine(967) in 16S rRNA + S-adenosyl-L-homocysteine + H(+). Functionally, specifically methylates the cytosine at position 967 (m5C967) of 16S rRNA. The protein is Ribosomal RNA small subunit methyltransferase B of Klebsiella pneumoniae (strain 342).